The sequence spans 571 residues: Proline--tRNA ligase (571 aa).

This sequence belongs to the class-II aminoacyl-tRNA synthetase family. ProS type 1 subfamily. Homodimer.

The protein resides in the cytoplasm. It carries out the reaction tRNA(Pro) + L-proline + ATP = L-prolyl-tRNA(Pro) + AMP + diphosphate. Its function is as follows. Catalyzes the attachment of proline to tRNA(Pro) in a two-step reaction: proline is first activated by ATP to form Pro-AMP and then transferred to the acceptor end of tRNA(Pro). As ProRS can inadvertently accommodate and process non-cognate amino acids such as alanine and cysteine, to avoid such errors it has two additional distinct editing activities against alanine. One activity is designated as 'pretransfer' editing and involves the tRNA(Pro)-independent hydrolysis of activated Ala-AMP. The other activity is designated 'posttransfer' editing and involves deacylation of mischarged Ala-tRNA(Pro). The misacylated Cys-tRNA(Pro) is not edited by ProRS. The chain is Proline--tRNA ligase from Leuconostoc citreum (strain KM20).